A 554-amino-acid polypeptide reads, in one-letter code: MKNQDKKNGPAKHSNSKGSPGQREAGPEGAHGRPRQTAPGAEAEGSTSQAPGKTEGARAKAAQPGALCDVSEELSRQLEDILSTYCVDNNQGGPAEEGAQGEPTEPEDTEKSRTYAARNGEPEPGIPVVNGEKETSKGEPGTEEIRASDEVGDRDHRRPQEKKKAKGLGKEITLLMQTLNTLSTPEEKLAALCKKYAELLEEHRNSQKQMKLLQKKQSQLVQEKDHLRGEHSKAVLARSKLESLCRELQRHNRSLKEEGVQRAREEEEKRKEVTSHFQVTLNDIQLQMEQHNERNSKLRQENMELAERLKKLIEQYELREEHIDKVFKHKDLQQQLVDAKLQQAQEMLKEAEERHQREKEFLLKEAVESQRMCELMKQQETHLKQQLALYTEKFEEFQNTLSKSSEVFTTFKQEMEKMTKKIKKLEKETTMYRSRWESSNKALLEMAEEKTVRDKELEGLQVKIQRLEKLCRALQTERNDLNKRVQDLTAGGITDIGSERRPEATTASKEQGVESPGAQPASSPRATDAPCCSGAPSTGTAGQTGPGEPTPATA.

The interval 1–66 (MKNQDKKNGP…ARAKAAQPGA (66 aa)) is disordered. Ser-71 is modified (phosphoserine). A disordered region spans residues 85-166 (YCVDNNQGGP…RRPQEKKKAK (82 aa)). Residues 91-103 (QGGPAEEGAQGEP) are compositionally biased toward low complexity. Residues 143-158 (EEIRASDEVGDRDHRR) show a composition bias toward basic and acidic residues. Residues 186–491 (EEKLAALCKK…NKRVQDLTAG (306 aa)) adopt a coiled-coil conformation. Residues 492–554 (GITDIGSERR…GPGEPTPATA (63 aa)) are disordered. Phosphoserine occurs at positions 515 and 523.

Belongs to the taxilin family. As to quaternary structure, binds to the C-terminal coiled coil region of syntaxin family members STX1A, STX3A and STX4A, but not when these proteins are complexed with SNAP25, VAMP2 or STXBP1, suggesting that it interacts with syntaxins that do not form the SNARE complex.

In terms of biological role, may be involved in intracellular vesicle traffic and potentially in calcium-dependent exocytosis in neuroendocrine cells. The protein is Alpha-taxilin (Txlna) of Mus musculus (Mouse).